Consider the following 1661-residue polypeptide: MHHVLNSTRPDHRFWFYDDVTQYGRTKYLNYYTPLVLLIFTVLFITYNIWKHYYYYDVLHLKQKNPIDELLYSSTDEDEQSPLINNNTITTNYVDNNCTKDALKNRHFSLEKLKSVKVNGEPHGTPEIVRRGFIEKSRIILEFFLVLSQVIIHSFILLHYVNKNPEFTQQGTITGLVEWCALFIIVSLRLANVNQNFKFINKYPGNLWSVSFINYLALFISMILPFRSIFIHHINSPISRKYYISQISINLALFLLLFFARIRNNFAIIYKTDSWITPSPEPVTSIAGFICWAWLDSFVWKAHKVSIKVKDIWGLMMQDYSFFVVKKFRYFVDHKVKRKRIFSLNLFFFFSNYLVLQCFWAFLGSVLSFIPTVLLKRILEYVEDQSSAPSNLAWFYVTVMFVGRILVAICQAQALFFGRRVCIRMKSIIISEIYTKALRRKISTNKTKPSNEDPQEINDQKSINGDEESTSSANLGAIINLMAIDAFKVSEICGYLHSFLEAFVMTVVALALLYRLLGFAAIVGVLIIVAMLPLNYKLAKYIGDLQKKNLAVTDNRIQKLNEAFQAIRIIKYFSWEENFEKDINTIRENELSLLLMRSIVWSISSFLWFVTPTIVTAASFAYYIYVQGEVLTTPVAFTALSLFTLLRDPLDRLSDMLSFVVQSKVSLDRVQDFLNENDTKKYDQLTIDPNGNRFAFENSTISWDKDNQDFKLKDLNIEFKTGKLNVVIGPTGSGKTSLLMALLGEMYLLNGKVVVPALEPRQELIVDANGTTNSIAYCSQAAWLLNDTVKNNILFNSPFNEARYKAVVEACGLKRDFEILKAGDLTEIGEKGITLSGGQKQRVSLARALYSNARHVLLDDCLSAVDSHTASWIYDNCITGPLMEDRTCILVSHNIALTLRNAELVVLLEDGRVKDQGDPIDMLQKGLFGEDELVKSSILSRANSSANLAAKSSTSLSNLPAVKEQQVSVNNNSSHFEAKKLQKSLRTEAERTEDGKLIKEETKEEGVVGLDVYKWYLKIFGGWKIVSFLASLFLIAQLLYIGQSWWVRAWASHNVIAKIIPRAQRAIAFISKKASHLIDWRGSSQISMASAENQPSSGHSTMYYLVLYLIIGFAQALLGAGKTILNFVAGINASRKIFNMILNKVLHSKIRFFDATPTGRIMNRFSKDIEAIDQELTPYIQGAFYSLIECLSTVILITFITPQFLSVAIVVSILYYFVGYFYMAGSRELKRFESISRSPIYQHFSETLVGVTTIRAFGDEGRFMQENLHKIDENNKPFFYLWVANRWLAFRIDMIGSLVIFGAGLFILFNINNLDSGMAGISLTYAISFTEGALWLVRLYSEVEMNMNSVERVKEYMEIEQEPYNEHKEIPPPQWPQDGKIEVNDLSLRYAPNLPRVIKNVSFSVDAQSKIGIVGRTGAGKSTIITALFRFLEPETGHIKIDNIDISGVDLQRLRRSITIIPQDPTLFSGTIKTNLDPYDEFSDRQIFEALKRVNLISEEQLQQGATRETSNEASSTNSENVNKFLDLSSEISEGGSNLSQGQRQLMCLARSLLRSPKIILLDEATASIDYSSDAKIQETIRKEFQGSTILTIAHRLRSVIDYDKILVMDAGEVKEYDHPYSLLLNKQSAFYSMCEHSGELDILIELAKKAFVEKLNSKKD.

Residues 1-33 (MHHVLNSTRPDHRFWFYDDVTQYGRTKYLNYYT) lie on the Lumenal side of the membrane. Asn6 carries N-linked (GlcNAc...) asparagine glycosylation. The helical transmembrane segment at 34-54 (PLVLLIFTVLFITYNIWKHYY) threads the bilayer. Topologically, residues 55-74 (YYDVLHLKQKNPIDELLYSS) are cytoplasmic. A helical membrane pass occupies residues 75–95 (TDEDEQSPLINNNTITTNYVD). Topologically, residues 96–133 (NNCTKDALKNRHFSLEKLKSVKVNGEPHGTPEIVRRGF) are lumenal. Asn97 carries N-linked (GlcNAc...) asparagine glycosylation. A helical transmembrane segment spans residues 134 to 154 (IEKSRIILEFFLVLSQVIIHS). Over 155–166 (FILLHYVNKNPE) the chain is Cytoplasmic. Residues 167–187 (FTQQGTITGLVEWCALFIIVS) traverse the membrane as a helical segment. Residues 188–205 (LRLANVNQNFKFINKYPG) are Lumenal-facing. The helical transmembrane segment at 206-226 (NLWSVSFINYLALFISMILPF) threads the bilayer. The Cytoplasmic portion of the chain corresponds to 227 to 345 (RSIFIHHINS…VKRKRIFSLN (119 aa)). The helical transmembrane segment at 346-366 (LFFFFSNYLVLQCFWAFLGSV) threads the bilayer. An ABC transmembrane type-1 1 domain is found at 354 to 662 (LVLQCFWAFL…LSDMLSFVVQ (309 aa)). Residues 367 to 393 (LSFIPTVLLKRILEYVEDQSSAPSNLA) lie on the Lumenal side of the membrane. The chain crosses the membrane as a helical span at residues 394 to 414 (WFYVTVMFVGRILVAICQAQA). Residues 415–495 (LFFGRRVCIR…AFKVSEICGY (81 aa)) are Cytoplasmic-facing. Positions 445 to 468 (NKTKPSNEDPQEINDQKSINGDEE) are disordered. Residues 496 to 516 (LHSFLEAFVMTVVALALLYRL) traverse the membrane as a helical segment. The Lumenal segment spans residues 517 to 519 (LGF). Residues 520–540 (AAIVGVLIIVAMLPLNYKLAK) form a helical membrane-spanning segment. Over 541–602 (YIGDLQKKNL…LLLMRSIVWS (62 aa)) the chain is Cytoplasmic. Residues 603 to 623 (ISSFLWFVTPTIVTAASFAYY) traverse the membrane as a helical segment. The Lumenal portion of the chain corresponds to 624–644 (IYVQGEVLTTPVAFTALSLFT). The helical transmembrane segment at 645-665 (LLRDPLDRLSDMLSFVVQSKV) threads the bilayer. Residues 666 to 1053 (SLDRVQDFLN…SWWVRAWASH (388 aa)) lie on the Cytoplasmic side of the membrane. Residues 694–935 (FAFENSTISW…GLFGEDELVK (242 aa)) form the ABC transporter 1 domain. 729 to 736 (GPTGSGKT) serves as a coordination point for ATP. Phosphoserine occurs at positions 936, 940, and 955. The 320-residue stretch at 1026 to 1345 (VSFLASLFLI…LVRLYSEVEM (320 aa)) folds into the ABC transmembrane type-1 2 domain. The helical transmembrane segment at 1054-1074 (NVIAKIIPRAQRAIAFISKKA) threads the bilayer. Over 1075–1114 (SHLIDWRGSSQISMASAENQPSSGHSTMYYLVLYLIIGFA) the chain is Lumenal. The helical transmembrane segment at 1115–1135 (QALLGAGKTILNFVAGINASR) threads the bilayer. At 1136–1178 (KIFNMILNKVLHSKIRFFDATPTGRIMNRFSKDIEAIDQELTP) the chain is on the cytoplasmic side. Residues 1179 to 1199 (YIQGAFYSLIECLSTVILITF) traverse the membrane as a helical segment. Residue Ile1200 is a topological domain, lumenal. Residues 1201-1221 (TPQFLSVAIVVSILYYFVGYF) traverse the membrane as a helical segment. Over 1222-1292 (YMAGSRELKR…VANRWLAFRI (71 aa)) the chain is Cytoplasmic. A helical transmembrane segment spans residues 1293–1313 (DMIGSLVIFGAGLFILFNINN). Topologically, residues 1314 to 1315 (LD) are lumenal. The helical transmembrane segment at 1316–1336 (SGMAGISLTYAISFTEGALWL) threads the bilayer. At 1337-1661 (VRLYSEVEMN…FVEKLNSKKD (325 aa)) the chain is on the cytoplasmic side. An ABC transporter 2 domain is found at 1381–1636 (IEVNDLSLRY…KQSAFYSMCE (256 aa)). 1415-1422 (GRTGAGKS) contacts ATP.

It belongs to the ABC transporter superfamily. ABCC family. Conjugate transporter (TC 3.A.1.208) subfamily.

The protein resides in the vacuole membrane. Its function is as follows. Vacuolar class C ABC transporter which regulates the translocation of phosphatidylcholine to the vacuole lumen, the release of lumenal calcium stores, and acts as a negative regulator of vacuole fusion. Exhibits ATP-dependent bile acid transport. The protein is ATP-dependent bile acid permease (YBT1) of Saccharomyces cerevisiae (strain ATCC 204508 / S288c) (Baker's yeast).